The primary structure comprises 149 residues: Ribosomal RNA large subunit methyltransferase H (149 aa).

S-adenosyl-L-methionine-binding positions include Leu71, Gly98, and 117–122 (LSKLTL).

It belongs to the RNA methyltransferase RlmH family. In terms of assembly, homodimer.

The protein localises to the cytoplasm. The catalysed reaction is pseudouridine(1915) in 23S rRNA + S-adenosyl-L-methionine = N(3)-methylpseudouridine(1915) in 23S rRNA + S-adenosyl-L-homocysteine + H(+). Its function is as follows. Specifically methylates the pseudouridine at position 1915 (m3Psi1915) in 23S rRNA. This chain is Ribosomal RNA large subunit methyltransferase H, found in Campylobacter jejuni subsp. jejuni serotype O:6 (strain 81116 / NCTC 11828).